Consider the following 561-residue polypeptide: Arginine--tRNA ligase (561 aa).

A 'HIGH' region motif is present at residues 128 to 138 (ANPTGPLHVGH).

It belongs to the class-I aminoacyl-tRNA synthetase family. In terms of assembly, monomer.

Its subcellular location is the cytoplasm. It carries out the reaction tRNA(Arg) + L-arginine + ATP = L-arginyl-tRNA(Arg) + AMP + diphosphate. The protein is Arginine--tRNA ligase of Leptothrix cholodnii (strain ATCC 51168 / LMG 8142 / SP-6) (Leptothrix discophora (strain SP-6)).